We begin with the raw amino-acid sequence, 177 residues long: Large ribosomal subunit protein uL6 (177 aa).

It belongs to the universal ribosomal protein uL6 family. Part of the 50S ribosomal subunit.

This protein binds to the 23S rRNA, and is important in its secondary structure. It is located near the subunit interface in the base of the L7/L12 stalk, and near the tRNA binding site of the peptidyltransferase center. The sequence is that of Large ribosomal subunit protein uL6 from Salmonella dublin (strain CT_02021853).